The chain runs to 189 residues: dCTP deaminase, dUMP-forming (189 aa).

DCTP contacts are provided by residues 101 to 106 (KSSLGR), Asp119, 127 to 129 (TLE), Gln148, Tyr162, and Gln174. Glu129 (proton donor/acceptor) is an active-site residue.

The protein belongs to the dCTP deaminase family. As to quaternary structure, homotrimer.

It catalyses the reaction dCTP + 2 H2O = dUMP + NH4(+) + diphosphate. Its pathway is pyrimidine metabolism; dUMP biosynthesis; dUMP from dCTP: step 1/1. In terms of biological role, bifunctional enzyme that catalyzes both the deamination of dCTP to dUTP and the hydrolysis of dUTP to dUMP without releasing the toxic dUTP intermediate. The chain is dCTP deaminase, dUMP-forming from Rhodococcus jostii (strain RHA1).